The following is an 89-amino-acid chain: Small ribosomal subunit protein uS14A (89 aa).

This sequence belongs to the universal ribosomal protein uS14 family. As to quaternary structure, part of the 30S ribosomal subunit. Contacts proteins S3 and S10.

Its function is as follows. Binds 16S rRNA, required for the assembly of 30S particles and may also be responsible for determining the conformation of the 16S rRNA at the A site. This Oceanobacillus iheyensis (strain DSM 14371 / CIP 107618 / JCM 11309 / KCTC 3954 / HTE831) protein is Small ribosomal subunit protein uS14A.